Consider the following 729-residue polypeptide: MLSTQFNRDNQYQAITKPSLLAGCIALALLPSAAFAAPATEETVIVEGSATAPDDGENDYSVTSTSAGTKMQMTQRDIPQSVTIVSQQRMEDQQLQTLGEVMENTLGISKSQADSDRALYYSRGFQIDNYMVDGIPTYFESRWNLGDALSDMALFERVEVVRGATGLMTGTGNPSAAINMVRKHATSREFKGDVSAEYGSWNKERYVADLQSPLTEDGKIRARIVGGYQNNDSWLDRYNSEKTFFSGIVDADLGDLTTLSAGYEYQRIDVNSPTWGGLPRWNTDGSSNSYDRARSTAPDWAYNDKEINKVFMTLKQQFADTWQATLNATHSEVEFDSKMMYVDAYVNKADGMLVGPYSNYGPGFDYVGGTGWNSGKRKVDALDLFADGSYELFGRQHNLMFGGSYSKQNNRYFSSWANIFPDEIGSFYNFNGNFPQTDWSPQSLAQDDTTHMKSLYAATRVTLADPLHLILGARYTNWRVDTLTYSMEKNHTTPYAGLVFDINDNWSTYASYTSIFQPQNDRDSSGKYLAPITGNNYELGLKSDWMNSRLTTTLAIFRIEQDNVAQSTGTPIPGSNGETAYKAVDGTVSKGVEFELNGAITDNWQLTFGATRYIAEDNEGNAVNPNLPRTTVKMFTSYRLPVMPELTVGGGVNWQNRVYTDTVTPYGTFRAEQGSYALVDLFTRYQVTKNFSLQGNVNNLFDKTYDTNVEGSIVYGTPRNFSITGTYQF.

A signal peptide spans 1–36 (MLSTQFNRDNQYQAITKPSLLAGCIALALLPSAAFA). A TonB box motif is present at residues 42–49 (ETVIVEGS). The tract at residues 48–72 (GSATAPDDGENDYSVTSTSAGTKMQ) is disordered. Positions 60–72 (YSVTSTSAGTKMQ) are enriched in polar residues. The region spanning 74–183 (TQRDIPQSVT…PSAAINMVRK (110 aa)) is the TBDR plug domain. The Fe(III)-coprogen site is built by R117, R142, W275, Y357, N373, and W416. In terms of domain architecture, TBDR beta-barrel spans 189 to 729 (EFKGDVSAEY…NFSITGTYQF (541 aa)). The TonB C-terminal box signature appears at 712-729 (SIVYGTPRNFSITGTYQF).

This sequence belongs to the TonB-dependent receptor family.

Its subcellular location is the cell outer membrane. In terms of biological role, involved in the active transport across the outer membrane of iron complexed with linear hydroxamate siderophores coprogen, rhodotorulic acid and ferrioxamine B. Binds Fe-coprogen with high affinity, rhodotorulic acid to a lesser extent, and weakly to ferrioxamine B. Selective for planar siderophores. Does not use cyclic siderophores ferrichrome nor ferrioxamine E as substrates. This Escherichia coli (strain K12) protein is Hydroxamate siderophore receptor FhuE.